A 331-amino-acid chain; its full sequence is Ornithine carbamoyltransferase, catabolic (331 aa).

Residues 57-60 (STRT), Gln-82, Arg-106, and 133-136 (HPTQ) each bind carbamoyl phosphate. L-ornithine is bound by residues Asn-166, Asp-230, and 234 to 235 (SM). Residues 272 to 273 (CL) and Arg-317 each bind carbamoyl phosphate.

Belongs to the aspartate/ornithine carbamoyltransferase superfamily. OTCase family.

The protein resides in the cytoplasm. The enzyme catalyses carbamoyl phosphate + L-ornithine = L-citrulline + phosphate + H(+). Its pathway is amino-acid degradation; L-arginine degradation via ADI pathway; carbamoyl phosphate from L-arginine: step 2/2. Its function is as follows. Reversibly catalyzes the transfer of the carbamoyl group from carbamoyl phosphate (CP) to the N(epsilon) atom of ornithine (ORN) to produce L-citrulline. This chain is Ornithine carbamoyltransferase, catabolic (arcB), found in Clostridium perfringens (strain ATCC 13124 / DSM 756 / JCM 1290 / NCIMB 6125 / NCTC 8237 / Type A).